Reading from the N-terminus, the 247-residue chain is Large ribosomal subunit protein uL30 (247 aa).

Methionine 1 is subject to N-acetylmethionine. 4 consecutive repeat copies span residues 7–17 (KKKVPAVPETL), 18–29 (KKKRRNFAELKI), 30–41 (KRLRKKFAQKML), and 42–53 (RKARRKLIYEKA). The 4 X 12 AA tandem repeats stretch occupies residues 7–53 (KKKVPAVPETLKKKRRNFAELKIKRLRKKFAQKMLRKARRKLIYEKA). At threonine 16 the chain carries Phosphothreonine. Lysine 123 carries the post-translational modification N6-acetyllysine. An N6-succinyllysine modification is found at lysine 126. Position 138 is a phosphotyrosine (tyrosine 138).

The protein belongs to the universal ribosomal protein uL30 family. As to quaternary structure, component of the large ribosomal subunit. Homodimer. Interacts with DHX33.

The protein localises to the cytoplasm. Its function is as follows. Component of the large ribosomal subunit. The ribosome is a large ribonucleoprotein complex responsible for the synthesis of proteins in the cell. Binds to G-rich structures in 28S rRNA and in mRNAs. Plays a regulatory role in the translation apparatus; inhibits cell-free translation of mRNAs. The sequence is that of Large ribosomal subunit protein uL30 (RPL7) from Macaca fascicularis (Crab-eating macaque).